A 108-amino-acid chain; its full sequence is Small ribosomal subunit protein bS6 (108 aa).

This sequence belongs to the bacterial ribosomal protein bS6 family.

Binds together with bS18 to 16S ribosomal RNA. The polypeptide is Small ribosomal subunit protein bS6 (Trichormus variabilis (strain ATCC 29413 / PCC 7937) (Anabaena variabilis)).